Here is a 192-residue protein sequence, read N- to C-terminus: dCTP deaminase, dUMP-forming (192 aa).

Residues 101 to 106, Asp119, 127 to 129, Gln148, Tyr162, and Gln174 each bind dCTP; these read KSSLGR and TLE. Glu129 acts as the Proton donor/acceptor in catalysis. Residues 171–192 form a disordered region; that stretch reads YQGQRGPTPSRSWQSWHTWPTR.

This sequence belongs to the dCTP deaminase family. Homotrimer.

The enzyme catalyses dCTP + 2 H2O = dUMP + NH4(+) + diphosphate. The protein operates within pyrimidine metabolism; dUMP biosynthesis; dUMP from dCTP: step 1/1. Its function is as follows. Bifunctional enzyme that catalyzes both the deamination of dCTP to dUTP and the hydrolysis of dUTP to dUMP without releasing the toxic dUTP intermediate. This chain is dCTP deaminase, dUMP-forming, found in Salinispora arenicola (strain CNS-205).